Here is a 1338-residue protein sequence, read N- to C-terminus: MASPPRHGPPGPASGDGPNLNNNNNNNNHSVRKCGYLRKQKHGHKRFFVLRGPGAGGDEATAGGGSAPQPPRLEYYESEKKWRSKAGAPKRVIALDCCLNINKRADAKHKYLIALYTKDEYFAVAAENEQEQEGWYRALTDLVSEGRAAAGDAPPAAAPAASCSASLPGALGGSAGAAGAEDSYGLVAPATAAYREVWQVNLKPKGLGQSKNLTGVYRLCLSARTIGFVKLNCEQPSVTLQLMNIRRCGHSDSFFFIEVGRSAVTGPGELWMQADDSVVAQNIHETILEAMKALKELFEFRPRSKSQSSGSSATHPISVPGARRHHHLVNLPPSQTGLVRRSRTDSLAATPPAAKCSSCRVRTASEGDGGAAAGAAAAGARPVSVAGSPLSPGPVRAPLSRSHTLSGGCGGRGSKVALLPAGGALQHSRSMSMPVAHSPPAATSPGSLSSSSGHGSGSYPPPPGPHPPLPHPLHHGPGQRPSSGSASASGSPSDPGFMSLDEYGSSPGDLRAFCSHRSNTPESIAETPPARDGGGGGEFYGYMTMDRPLSHCGRSYRRVSGDAAQDLDRGLRKRTYSLTTPARQRPVPQPSSASLDEYTLMRATFSGSAGRLCPSCPASSPKVAYHPYPEDYGDIEIGSHRSSSSNLGADDGYMPMTPGAALAGSGSGSCRSDDYMPMSPASVSAPKQILQPRAAAAAAAAVPSAGPAGPAPTSAAGRTFPASGGGYKASSPAESSPEDSGYMRMWCGSKLSMEHADGKLLPNGDYLNVSPSDAVTTGTPPDFFSAALHPGGEPLRGVPGCCYSSLPRSYKAPYTCGGDSDQYVLMSSPVGRILEEERLEPQATPGPSQAASAFGAGPTQPPHPVVPSPVRPSGGRPEGFLGQRGRAVRPTRLSLEGLPSLPSMHEYPLPPEPKSPGEYINIDFGEPGARLSPPAPPLLASAASSSSLLSASSPASSLGSGTPGTSSDSRQRSPLSDYMNLDFSSPKSPKPGAPSGHPVGSLDGLLSPEASSPYPPLPPRPSASPSSSLQPPPPPPAPGELYRLPPASAVATAQGPGAASSLSSDTGDNGDYTEMAFGVAATPPQPIAAPPKPEAARVASPTSGVKRLSLMEQVSGVEAFLQASQPPDPHRGAKVIRADPQGGRRRHSSETFSSTTTVTPVSPSFAHNPKRHNSASVENVSLRKSSEGGVGVGPGGGDEPPTSPRQLQPAPPLAPQGRPWTPGQPGGLVGCPGSGGSPMRRETSAGFQNGLNYIAIDVREEPGLPPQPQPPPPPLPQPGDKSSWGRTRSLGGLISAVGVGSTGGGCGGPGPGALPPANTYASIDFLSHHLKEATIVKE.

Residues 1-12 (MASPPRHGPPGP) are compositionally biased toward pro residues. 2 disordered regions span residues 1–31 (MASP…NHSV) and 49–72 (VLRG…QPPR). In terms of domain architecture, PH spans 16–144 (DGPNLNNNNN…WYRALTDLVS (129 aa)). The segment covering 19–28 (NLNNNNNNNN) has biased composition (low complexity). Gly residues predominate over residues 53-66 (PGAGGDEATAGGGS). Residues 194 to 298 (YREVWQVNLK…EAMKALKELF (105 aa)) enclose the IRS-type PTB domain. Residues 303–411 (RSKSQSSGSS…SHTLSGGCGG (109 aa)) form a disordered region. 2 positions are modified to phosphoserine: serine 306 and serine 346. Threonine 350 is subject to Phosphothreonine. A phosphoserine mark is found at serine 365, serine 384, serine 388, and serine 391. Arginine 412 bears the Omega-N-methylarginine mark. The disordered stretch occupies residues 428-537 (SRSMSMPVAH…PPARDGGGGG (110 aa)). The segment covering 444–453 (SPGSLSSSSG) has biased composition (low complexity). Over residues 459-471 (YPPPPGPHPPLPH) the composition is skewed to pro residues. The span at 475–493 (HGPGQRPSSGSASASGSPS) shows a compositional bias: low complexity. Position 520 is a phosphothreonine (threonine 520). Serine 523 is subject to Phosphoserine. Threonine 527 bears the Phosphothreonine mark. Residue tyrosine 540 is modified to Phosphotyrosine; by INSR. The YXXM motif 1 motif lies at 540 to 543 (YGYM). A Phosphoserine; by PLK1 modification is found at serine 560. Position 577 is a phosphoserine (serine 577). A phosphothreonine mark is found at threonine 579 and threonine 580. The residue at position 594 (serine 594) is a Phosphoserine. Residues 598–601 (YTLM) carry the YXXM motif 2 motif. Phosphoserine is present on residues serine 608 and serine 620. Phosphotyrosine; by INSR is present on residues tyrosine 653 and tyrosine 675. 2 short sequence motifs (YXXM motif) span residues 653-656 (YMPM) and 675-678 (YMPM). Phosphoserine is present on residues serine 679 and serine 682. Residues 703-719 (PSAGPAGPAPTSAAGRT) show a composition bias toward low complexity. The tract at residues 703 to 739 (PSAGPAGPAPTSAAGRTFPASGGGYKASSPAESSPED) is disordered. Phosphoserine is present on residues serine 735 and serine 736. Positions 742-745 (YMRM) match the YXXM motif 5 motif. Serine 770 carries the phosphoserine modification. Threonine 779 carries the phosphothreonine modification. The residue at position 805 (serine 805) is a Phosphoserine. The short motif at 823–826 (YVLM) is the YXXM motif 6 element. Residue serine 828 is modified to Phosphoserine. The tract at residues 840 to 1101 (EPQATPGPSQ…KPEAARVASP (262 aa)) is disordered. Pro residues predominate over residues 859-870 (TQPPHPVVPSPV). At serine 915 the chain carries Phosphoserine. The residue at position 919 (tyrosine 919) is a Phosphotyrosine; by INSR. Residues 938-967 (LLASAASSSSLLSASSPASSLGSGTPGTSS) show a composition bias toward low complexity. At serine 973 the chain carries Phosphoserine. Residue tyrosine 978 is modified to Phosphotyrosine; by INSR. Pro residues predominate over residues 1013 to 1022 (PYPPLPPRPS). Residues 1072–1075 (YTEM) carry the YXXM motif 7 motif. At threonine 1082 the chain carries Phosphothreonine. A compositionally biased stretch (pro residues) spans 1083–1093 (PPQPIAAPPKP). Residue serine 1100 is modified to Phosphoserine. Serine 1109 carries the post-translational modification Phosphoserine; by PLK1. The disordered stretch occupies residues 1121 to 1296 (LQASQPPDPH…TRSLGGLISA (176 aa)). The segment covering 1150–1165 (ETFSSTTTVTPVSPSF) has biased composition (low complexity). Threonine 1159 is modified (phosphothreonine). Residues serine 1162, serine 1174, serine 1176, and serine 1186 each carry the phosphoserine modification. Positions 1174 to 1183 (SASVENVSLR) are enriched in polar residues. A compositionally biased stretch (gly residues) spans 1188-1198 (GGVGVGPGGGD). Serine 1203 carries the phosphoserine modification. A compositionally biased stretch (gly residues) spans 1224-1236 (QPGGLVGCPGSGG). Position 1253 is a phosphotyrosine; by INSR (tyrosine 1253). Residues 1263-1277 (GLPPQPQPPPPPLPQ) show a composition bias toward pro residues. Lysine 1331 is covalently cross-linked (Glycyl lysine isopeptide (Lys-Gly) (interchain with G-Cter in ubiquitin)).

Interacts with PHIP. Interacts with SH2B1; this interaction enhances leptin-induced activation of the PI3-kinase pathway. Interacts with GRB2. Interacts with PIK3R1. Interacts with DVL2; this interaction promotes the Wnt/beta-catenin signaling pathway. Phosphorylation fluctuates in a cell-cycle dependent manner with hyperphosphorylation during mitosis. Phosphorylated at Ser-560 and Ser-1109 by PLK1; these phosphorylations prevent the activation of the PI3K pathway upon growth factor stimulation by inhibiting the binding between IRS2 and the PI3K pathway components and increasing the level of IRS2 protein degradation. In addition, they prevent premature mitotic exit. Post-translationally, monoubiquitinated by NEDD4; leading to enhanced IGF1 signaling. During cell cycle, ubiquitination and proteasomal degradation are controlled by FZR1.

It localises to the cytoplasm. It is found in the cytosol. Signaling adapter protein that participates in the signal transduction from two prominent receptor tyrosine kinases, insulin receptor/INSR and insulin-like growth factor I receptor/IGF1R. Plays therefore an important role in development, growth, glucose homeostasis as well as lipid metabolism. Upon phosphorylation by the insulin receptor, functions as a signaling scaffold that propagates insulin action through binding to SH2 domain-containing proteins including the p85 regulatory subunit of PI3K, NCK1, NCK2, GRB2 or SHP2. Recruitment of GRB2 leads to the activation of the guanine nucleotide exchange factor SOS1 which in turn triggers the Ras/Raf/MEK/MAPK signaling cascade. Activation of the PI3K/AKT pathway is responsible for most of insulin metabolic effects in the cell, and the Ras/Raf/MEK/MAPK is involved in the regulation of gene expression and in cooperation with the PI3K pathway regulates cell growth and differentiation. Acts a positive regulator of the Wnt/beta-catenin signaling pathway through suppression of DVL2 autophagy-mediated degradation leading to cell proliferation. Plays a role in cell cycle progression by promoting a robust spindle assembly checkpoint (SAC) during M-phase. In macrophages, IL4-induced tyrosine phosphorylation of IRS2 leads to the recruitment and activation of phosphoinositide 3-kinase (PI3K). The sequence is that of Insulin receptor substrate 2 (IRS2) from Homo sapiens (Human).